We begin with the raw amino-acid sequence, 316 residues long: Leucine-rich repeat-containing protein 73 (316 aa).

LRR repeat units lie at residues 57 to 78, 86 to 106, 114 to 137, 145 to 166, 174 to 187, 202 to 223, and 231 to 250; these read SLAQ…KQLA, SIQS…ALLN, ALVA…CGLL, GLKE…SRLA, QVRV…PLGD, TLEV…TLLD, and ALRS…QQQI. Residues 257–296 are disordered; that stretch reads GEEEEEMAGGAADTQEWGRGREPAAHQRGGSSWKCPSDPN. The span at 272–281 shows a compositional bias: basic and acidic residues; that stretch reads EWGRGREPAA.

The protein is Leucine-rich repeat-containing protein 73 (Lrrc73) of Rattus norvegicus (Rat).